The sequence spans 213 residues: Macrodontain-1 (213 aa).

Disulfide bonds link Cys23/Cys63, Cys57/Cys96, and Cys153/Cys201. Residue Cys26 is part of the active site. Residues His159 and Asn176 contribute to the active site.

Monomer. Fruits.

Inhibited by the general cysteine protease inhibitor E64 (L-trans-epoxysuccinyl-leucylamide-(4-guanido)-butane). Its function is as follows. Cysteine protease that catalyzes the preferential cleavage: Ala-|-Xaa &gt; Gln-|-Xaa &gt; Tyr-Xaa &gt;&gt; Leu-|-Xaa &gt; Gly-|-Xaa. Hydrolyzes the synthetic peptide substrate Bz-Phe-Val-Arg-pNA. The sequence is that of Macrodontain-1 from Ananas macrodontes (False pineapple).